We begin with the raw amino-acid sequence, 380 residues long: Cytochrome b (380 aa).

A run of 4 helical transmembrane segments spans residues Tyr-34–Met-54, Trp-78–Ile-99, Trp-114–Leu-134, and Phe-179–Leu-199. The heme b site is built by His-84 and His-98. Residues His-183 and His-197 each coordinate heme b. His-202 is a binding site for a ubiquinone. 4 helical membrane-spanning segments follow: residues Tyr-227–Asn-247, Leu-289–His-309, Leu-321–Gly-341, and Phe-348–Pro-368.

The protein belongs to the cytochrome b family. As to quaternary structure, the cytochrome bc1 complex contains 3 respiratory subunits (MT-CYB, CYC1 and UQCRFS1), 2 core proteins (UQCRC1 and UQCRC2) and probably 6 low-molecular weight proteins. Heme b is required as a cofactor.

It is found in the mitochondrion inner membrane. Functionally, component of the ubiquinol-cytochrome c reductase complex (complex III or cytochrome b-c1 complex) that is part of the mitochondrial respiratory chain. The b-c1 complex mediates electron transfer from ubiquinol to cytochrome c. Contributes to the generation of a proton gradient across the mitochondrial membrane that is then used for ATP synthesis. In Typhlonectes natans (Rubber eel), this protein is Cytochrome b (mt-cyb).